We begin with the raw amino-acid sequence, 44 residues long: Relaxin (44 aa).

Pyrrolidone carboxylic acid is present on Q1. 3 disulfide bridges follow: C3-C31, C15-C44, and C30-C35.

The protein belongs to the insulin family. Heterodimer of a B chain and an A chain linked by two disulfide bonds.

It is found in the secreted. The polypeptide is Relaxin (Carcharias taurus (Sand tiger shark)).